The sequence spans 219 residues: MFYSHLLFFTFTFACSSSLNRKTKREMDLEDIILDTCHQKAVCAHIQMHLKETYVDELCKCGGGQECPLHWDPNDGHSITLAYNQWKFCSPTSQDLPVCTREQTAREFSYDMKPVSKKVQMFMFFNCLCPENHFYEFFNEREEETGGGQLAIIEERCEKMKQCEKTQICQKIETLQGKFLFKHVKCFCPGDQNCNDDLKKADAIDVGDDGSVQHYMKCH.

A signal peptide spans 1–16 (MFYSHLLFFTFTFACS). Positions 17-25 (SSLNRKTKR) are excised as a propeptide.

Contains 8 disulfide bonds. In terms of tissue distribution, expressed by the venom gland.

It localises to the secreted. In terms of biological role, voltage-gated potassium channel inhibitor. The chain is Kappa-scoloptoxin(11)-Ss1a from Scolopendra dehaani (Thai centipede).